The chain runs to 101 residues: Large ribosomal subunit protein uL23 (101 aa).

It belongs to the universal ribosomal protein uL23 family. In terms of assembly, part of the 50S ribosomal subunit. Contacts protein L29, and trigger factor when it is bound to the ribosome.

One of the early assembly proteins it binds 23S rRNA. One of the proteins that surrounds the polypeptide exit tunnel on the outside of the ribosome. Forms the main docking site for trigger factor binding to the ribosome. This chain is Large ribosomal subunit protein uL23, found in Paenarthrobacter aurescens (strain TC1).